The chain runs to 174 residues: ATP synthase subunit d, mitochondrial (174 aa).

The residue at position 2 (Ser2) is an N-acetylserine.

It belongs to the ATPase d subunit family.

The protein resides in the mitochondrion inner membrane. Mitochondrial membrane ATP synthase (F(1)F(0) ATP synthase or Complex V) produces ATP from ADP in the presence of a proton gradient across the membrane which is generated by electron transport complexes of the respiratory chain. F-type ATPases consist of two structural domains, F(1) - containing the extramembraneous catalytic core, and F(0) - containing the membrane proton channel, linked together by a central stalk and a peripheral stalk. During catalysis, ATP synthesis in the catalytic domain of F(1) is coupled via a rotary mechanism of the central stalk subunits to proton translocation. Part of the complex F(0) domain and the peripheric stalk, which acts as a stator to hold the catalytic alpha(3)beta(3) subcomplex and subunit a/ATP6 static relative to the rotary elements. The polypeptide is ATP synthase subunit d, mitochondrial (ATP7) (Kluyveromyces lactis (strain ATCC 8585 / CBS 2359 / DSM 70799 / NBRC 1267 / NRRL Y-1140 / WM37) (Yeast)).